A 383-amino-acid polypeptide reads, in one-letter code: Acetylornithine deacetylase (383 aa).

Zn(2+) is bound at residue His80. Asp82 is a catalytic residue. Asp112 lines the Zn(2+) pocket. Residue Glu144 is part of the active site. 3 residues coordinate Zn(2+): Glu145, Glu169, and His355.

Belongs to the peptidase M20A family. ArgE subfamily. Homodimer. The cofactor is Zn(2+). It depends on Co(2+) as a cofactor. Glutathione is required as a cofactor.

The protein resides in the cytoplasm. It catalyses the reaction N(2)-acetyl-L-ornithine + H2O = L-ornithine + acetate. It participates in amino-acid biosynthesis; L-arginine biosynthesis; L-ornithine from N(2)-acetyl-L-ornithine (linear): step 1/1. In terms of biological role, catalyzes the hydrolysis of the amide bond of N(2)-acetylated L-amino acids. Cleaves the acetyl group from N-acetyl-L-ornithine to form L-ornithine, an intermediate in L-arginine biosynthesis pathway, and a branchpoint in the synthesis of polyamines. The polypeptide is Acetylornithine deacetylase (Pectobacterium carotovorum subsp. carotovorum (strain PC1)).